We begin with the raw amino-acid sequence, 355 residues long: Chemerin-like receptor 2 (355 aa).

Residues methionine 1–serine 41 lie on the Extracellular side of the membrane. Asparagine 14 carries an N-linked (GlcNAc...) asparagine glycan. A helical transmembrane segment spans residues leucine 42–phenylalanine 62. At threonine 63–threonine 73 the chain is on the cytoplasmic side. The chain crosses the membrane as a helical span at residues leucine 74–isoleucine 94. Over serine 95 to alanine 112 the chain is Extracellular. Cysteine 110 and cysteine 187 form a disulfide bridge. The helical transmembrane segment at asparagine 113–leucine 133 threads the bilayer. Residues aspartate 134–serine 154 lie on the Cytoplasmic side of the membrane. The helical transmembrane segment at leucine 155–phenylalanine 175 threads the bilayer. Topologically, residues arginine 176–lysine 210 are extracellular. The chain crosses the membrane as a helical span at residues phenylalanine 211–phenylalanine 231. Residues lysine 232–threonine 247 lie on the Cytoplasmic side of the membrane. A helical transmembrane segment spans residues isoleucine 248–tryptophan 268. The Extracellular segment spans residues glutamate 269–isoleucine 286. The chain crosses the membrane as a helical span at residues proline 287–isoleucine 307. At serine 308–glutamine 355 the chain is on the cytoplasmic side.

Belongs to the chemokine-like receptor (CMKLR) family. As to expression, expressed in hippocampus.

Its subcellular location is the cell membrane. In terms of biological role, receptor for chemoattractant adipokine chemerin/RARRES2 suggesting a role for this receptor in the regulation of inflammation and energy homesotasis. Signals mainly via beta-arrestin pathway. Binding of RARRES2 activates weakly G proteins, calcium mobilization and MAPK1/MAPK3 (ERK1/2) phosphorylation too. Also acts as a receptor for TAFA1, mediates its effects on neuronal stem-cell proliferation and differentiation via the activation of ROCK/ERK and ROCK/STAT3 signaling pathway. Functionally, (Microbial infection) Coreceptor for HIV-1. This chain is Chemerin-like receptor 2, found in Homo sapiens (Human).